A 94-amino-acid polypeptide reads, in one-letter code: Large ribosomal subunit protein uL23 (94 aa).

The protein belongs to the universal ribosomal protein uL23 family. Part of the 50S ribosomal subunit. Contacts protein L29, and trigger factor when it is bound to the ribosome.

One of the early assembly proteins it binds 23S rRNA. One of the proteins that surrounds the polypeptide exit tunnel on the outside of the ribosome. Forms the main docking site for trigger factor binding to the ribosome. The polypeptide is Large ribosomal subunit protein uL23 (Akkermansia muciniphila (strain ATCC BAA-835 / DSM 22959 / JCM 33894 / BCRC 81048 / CCUG 64013 / CIP 107961 / Muc)).